A 154-amino-acid polypeptide reads, in one-letter code: MNKKYLRDLMNNDLSPLIKDTGIEFYDVEYSNNNGKNILTFYIEKDDGLISIDDCELINNKISDKLDEIDPISDPYYLEIASVDITTPFTRDKDFKKNLGNVVIVNLYQKLDSKKEFKGILTDFNDTEISLELEKKEIKIERSNISSIKLSLFD.

Belongs to the RimP family.

The protein resides in the cytoplasm. In terms of biological role, required for maturation of 30S ribosomal subunits. The sequence is that of Ribosome maturation factor RimP from Finegoldia magna (strain ATCC 29328 / DSM 20472 / WAL 2508) (Peptostreptococcus magnus).